Reading from the N-terminus, the 352-residue chain is Protein NDRG4 (352 aa).

A phosphoserine mark is found at Lys-293, Ser-298, Ser-317, and Ser-323. The interval 301–352 (AVPSASMTRLARSRTASLTSASSVDGSRPQPCAHSDSSEGMGQVNHTMEVSC) is disordered. Residues 308-323 (TRLARSRTASLTSASS) are compositionally biased toward low complexity. Residues 338–352 (SEGMGQVNHTMEVSC) show a composition bias toward polar residues.

Belongs to the NDRG family. Predominantly expressed in the brain (at protein level). Detected in neurons of various parts of brain, including the olfactory bulb, olfactory tuberculum, cerebral cortex, striatum, hippocampus, dentate gyrus, thalamus, hypothalamus, mesencephalon, cerebellum, pons and medulla oblongata.

The protein localises to the cytoplasm. It localises to the cytosol. In terms of biological role, contributes to the maintenance of intracerebral BDNF levels within the normal range, which is necessary for the preservation of spatial learning and the resistance to neuronal cell death caused by ischemic stress. May enhance growth factor-induced ERK1 and ERK2 phosphorylation. May attenuate NGF-promoted ELK1 phosphorylation in a microtubule-dependent manner. This Mus musculus (Mouse) protein is Protein NDRG4 (Ndrg4).